The sequence spans 452 residues: Protein phosphatase 1F (452 aa).

The 258-residue stretch at 153 to 410 (LVSIHAIRNT…DNITVMVVFL (258 aa)) folds into the PPM-type phosphatase domain. Residues Asp-195, Gly-196, Asp-357, and Asp-401 each coordinate Mn(2+). Residue Ser-452 is modified to Phosphoserine.

Belongs to the PP2C family. Associates with FEM1B. The cofactor is Mg(2+). It depends on Mn(2+) as a cofactor. Expressed in the liver.

The enzyme catalyses O-phospho-L-seryl-[protein] + H2O = L-seryl-[protein] + phosphate. It carries out the reaction O-phospho-L-threonyl-[protein] + H2O = L-threonyl-[protein] + phosphate. Functionally, dephosphorylates and concomitantly deactivates CaM-kinase II activated upon autophosphorylation, and CaM-kinases IV and I activated upon phosphorylation by CaM-kinase kinase. Promotes apoptosis. The chain is Protein phosphatase 1F (Ppm1f) from Mus musculus (Mouse).